The primary structure comprises 87 residues: Small ribosomal subunit protein uS17 (87 aa).

Belongs to the universal ribosomal protein uS17 family. As to quaternary structure, part of the 30S ribosomal subunit.

Its function is as follows. One of the primary rRNA binding proteins, it binds specifically to the 5'-end of 16S ribosomal RNA. This is Small ribosomal subunit protein uS17 from Geobacillus kaustophilus (strain HTA426).